The chain runs to 88 residues: Large ribosomal subunit protein bL27 (88 aa).

The disordered stretch occupies residues 1–21 (MAHKKGVGSSRNGRDSQPKML).

This sequence belongs to the bacterial ribosomal protein bL27 family.

This Pelotomaculum thermopropionicum (strain DSM 13744 / JCM 10971 / SI) protein is Large ribosomal subunit protein bL27.